The following is a 71-amino-acid chain: MFGLRMPELLLILAIVVILFGASRLPALGAGLGQGIRSFKKAFGGEDEKPTASGNGSTPTQSSSDQGSKQA.

The chain crosses the membrane as a helical span at residues 9 to 29; sequence LLLILAIVVILFGASRLPALG. The tract at residues 43–71 is disordered; the sequence is FGGEDEKPTASGNGSTPTQSSSDQGSKQA. Residues 52 to 71 show a composition bias toward polar residues; it reads ASGNGSTPTQSSSDQGSKQA.

It belongs to the TatA/E family. The Tat system comprises two distinct complexes: a TatABC complex, containing multiple copies of TatA, TatB and TatC subunits, and a separate TatA complex, containing only TatA subunits. Substrates initially bind to the TatABC complex, which probably triggers association of the separate TatA complex to form the active translocon.

Its subcellular location is the cell inner membrane. In terms of biological role, part of the twin-arginine translocation (Tat) system that transports large folded proteins containing a characteristic twin-arginine motif in their signal peptide across membranes. TatA could form the protein-conducting channel of the Tat system. The protein is Sec-independent protein translocase protein TatA of Anaeromyxobacter dehalogenans (strain 2CP-C).